Here is a 159-residue protein sequence, read N- to C-terminus: Succinate dehydrogenase [ubiquinone] cytochrome b small subunit, mitochondrial (159 aa).

The transit peptide at 1–36 (MATLWRLSVLCGARGGGALVLRTSVVRPAHVSAFLQ) directs the protein to the mitochondrion. Over 37 to 63 (DRHTPGWCGVQHIHLSPSHQASSKAAS) the chain is Mitochondrial matrix. Residues 64–85 (LHWTGERVVSVLLLGLLPAAYL) form a helical membrane-spanning segment. Residues 86–90 (NPCSA) are Mitochondrial intermembrane-facing. Residues 91–111 (MDYSLAAALTLHGHWGIGQVV) traverse the membrane as a helical segment. Histidine 102 lines the heme b pocket. Over 112 to 120 (TDYVRGDAL) the chain is Mitochondrial matrix. Residue tyrosine 114 participates in a ubiquinone binding. A helical membrane pass occupies residues 121 to 142 (QKVAKAGLLALSAFTFAGLCYF). Over 143-159 (NYHDVGICKAVAMLWKL) the chain is Mitochondrial intermembrane.

Belongs to the CybS family. In terms of assembly, component of complex II composed of four subunits: the flavoprotein (FP) SDHA, iron-sulfur protein (IP) SDHB, and a cytochrome b560 composed of SDHC and SDHD.

The protein resides in the mitochondrion inner membrane. It participates in carbohydrate metabolism; tricarboxylic acid cycle. Functionally, membrane-anchoring subunit of succinate dehydrogenase (SDH) that is involved in complex II of the mitochondrial electron transport chain and is responsible for transferring electrons from succinate to ubiquinone (coenzyme Q). SDH also oxidizes malate to the non-canonical enol form of oxaloacetate, enol-oxaloacetate. Enol-oxaloacetate, which is a potent inhibitor of the succinate dehydrogenase activity, is further isomerized into keto-oxaloacetate. This Sus scrofa (Pig) protein is Succinate dehydrogenase [ubiquinone] cytochrome b small subunit, mitochondrial (SDHD).